Consider the following 452-residue polypeptide: Bifunctional protein GlmU (452 aa).

The pyrophosphorylase stretch occupies residues 1 to 232 (MTARNSLTIV…EDEVRGINTK (232 aa)). UDP-N-acetyl-alpha-D-glucosamine is bound by residues 11 to 14 (LAAG), Lys25, Gln78, and 83 to 84 (GT). Position 108 (Asp108) interacts with Mg(2+). Positions 144, 158, 173, and 230 each coordinate UDP-N-acetyl-alpha-D-glucosamine. Position 230 (Asn230) interacts with Mg(2+). A linker region spans residues 233 to 253 (AQLAEAETVMQTRLRLAAMAA). The interval 254–452 (GVTLIAPETV…KSRHRKPKAH (199 aa)) is N-acetyltransferase. The UDP-N-acetyl-alpha-D-glucosamine site is built by Arg319 and Lys337. His349 (proton acceptor) is an active-site residue. 2 residues coordinate UDP-N-acetyl-alpha-D-glucosamine: Tyr352 and Asn363. Acetyl-CoA is bound by residues Ala366, 372–373 (NY), Ser391, Ser409, and Arg426.

The protein in the N-terminal section; belongs to the N-acetylglucosamine-1-phosphate uridyltransferase family. This sequence in the C-terminal section; belongs to the transferase hexapeptide repeat family. In terms of assembly, homotrimer. The cofactor is Mg(2+).

It is found in the cytoplasm. It catalyses the reaction alpha-D-glucosamine 1-phosphate + acetyl-CoA = N-acetyl-alpha-D-glucosamine 1-phosphate + CoA + H(+). The enzyme catalyses N-acetyl-alpha-D-glucosamine 1-phosphate + UTP + H(+) = UDP-N-acetyl-alpha-D-glucosamine + diphosphate. The protein operates within nucleotide-sugar biosynthesis; UDP-N-acetyl-alpha-D-glucosamine biosynthesis; N-acetyl-alpha-D-glucosamine 1-phosphate from alpha-D-glucosamine 6-phosphate (route II): step 2/2. It functions in the pathway nucleotide-sugar biosynthesis; UDP-N-acetyl-alpha-D-glucosamine biosynthesis; UDP-N-acetyl-alpha-D-glucosamine from N-acetyl-alpha-D-glucosamine 1-phosphate: step 1/1. Its pathway is bacterial outer membrane biogenesis; LPS lipid A biosynthesis. Functionally, catalyzes the last two sequential reactions in the de novo biosynthetic pathway for UDP-N-acetylglucosamine (UDP-GlcNAc). The C-terminal domain catalyzes the transfer of acetyl group from acetyl coenzyme A to glucosamine-1-phosphate (GlcN-1-P) to produce N-acetylglucosamine-1-phosphate (GlcNAc-1-P), which is converted into UDP-GlcNAc by the transfer of uridine 5-monophosphate (from uridine 5-triphosphate), a reaction catalyzed by the N-terminal domain. The protein is Bifunctional protein GlmU of Rhodopseudomonas palustris (strain TIE-1).